Consider the following 205-residue polypeptide: Glycerol-3-phosphate acyltransferase 1 (205 aa).

The next 5 membrane-spanning stretches (helical) occupy residues 7–27 (TLIG…KLFL), 52–74 (WGIL…VYFV), 78–100 (HINI…WNHF), 125–145 (LLIA…PLVF), and 160–180 (AGIV…QDII).

It belongs to the PlsY family. Probably interacts with PlsX.

It is found in the cell membrane. It carries out the reaction an acyl phosphate + sn-glycerol 3-phosphate = a 1-acyl-sn-glycero-3-phosphate + phosphate. It participates in lipid metabolism; phospholipid metabolism. In terms of biological role, catalyzes the transfer of an acyl group from acyl-phosphate (acyl-PO(4)) to glycerol-3-phosphate (G3P) to form lysophosphatidic acid (LPA). This enzyme utilizes acyl-phosphate as fatty acyl donor, but not acyl-CoA or acyl-ACP. In Lactobacillus acidophilus (strain ATCC 700396 / NCK56 / N2 / NCFM), this protein is Glycerol-3-phosphate acyltransferase 1.